The sequence spans 252 residues: 2-succinyl-6-hydroxy-2,4-cyclohexadiene-1-carboxylate synthase (252 aa).

Belongs to the AB hydrolase superfamily. MenH family. Monomer.

It catalyses the reaction 5-enolpyruvoyl-6-hydroxy-2-succinyl-cyclohex-3-ene-1-carboxylate = (1R,6R)-6-hydroxy-2-succinyl-cyclohexa-2,4-diene-1-carboxylate + pyruvate. It participates in quinol/quinone metabolism; 1,4-dihydroxy-2-naphthoate biosynthesis; 1,4-dihydroxy-2-naphthoate from chorismate: step 3/7. The protein operates within quinol/quinone metabolism; menaquinone biosynthesis. Its function is as follows. Catalyzes a proton abstraction reaction that results in 2,5-elimination of pyruvate from 2-succinyl-5-enolpyruvyl-6-hydroxy-3-cyclohexene-1-carboxylate (SEPHCHC) and the formation of 2-succinyl-6-hydroxy-2,4-cyclohexadiene-1-carboxylate (SHCHC). This Shigella sonnei (strain Ss046) protein is 2-succinyl-6-hydroxy-2,4-cyclohexadiene-1-carboxylate synthase.